The following is a 769-amino-acid chain: Intron Large complex component GCFC2 (769 aa).

Disordered regions lie at residues 1–122 (MALR…PIVE) and 134–212 (RKRE…DENQ). Ser-16, Ser-17, Ser-19, and Ser-85 each carry phosphoserine. Residue Thr-86 is modified to Phosphothreonine. Phosphoserine occurs at positions 118 and 169. The segment covering 190-201 (RMAEETSIRSEE) has biased composition (basic and acidic residues). Acidic residues predominate over residues 202 to 212 (SSEESQEDENQ). Ser-203 and Ser-206 each carry phosphoserine. Residues 256 to 308 (NLEIIKKQLNNRLTLLQESHRSHQREYEKYEQDIKSSKTAIQNLESASDHAQN) adopt a coiled-coil conformation.

The protein belongs to the GCF family. As to quaternary structure, found in the Intron Large (IL) complex, a post-mRNA release spliceosomal complex containing the excised intron, U2, U5 and U6 snRNPs, and splicing factors. Interacts with TFIP11 and DHX15.

It localises to the nucleus. It is found in the nucleoplasm. The protein resides in the nucleolus. Functionally, involved in pre-mRNA splicing through regulating spliceosome C complex formation. May play a role during late-stage splicing events and turnover of excised introns. The protein is Intron Large complex component GCFC2 (Gcfc2) of Mus musculus (Mouse).